The sequence spans 334 residues: Hydroxyproline O-arabinosyltransferase NOD3 (334 aa).

Residues 1-18 traverse the membrane as a helical; Signal-anchor segment; the sequence is LLMVLGFFFATYNLVSMI.

It belongs to the RDN family.

It is found in the golgi apparatus membrane. The catalysed reaction is trans-4-hydroxy-L-prolyl-[protein] + UDP-beta-L-arabinofuranose = O-(beta-L-arabinofuranosyl)-trans-4-hydroxy-L-prolyl-[protein] + UDP + H(+). Probable glycosyltransferase involved in the O-arabinosylation of several proteins including extensins and small signaling peptides. Catalyzes the transfer of the initial L-arabinose to the hydroxyl group of Hyp residues. Probably involved in the arabinosylation of CLAVATA3/ESR-related (CLE) signaling peptides that move from root to shoot, to interact with receptor kinase signaling that regulates nodulation. Involved in long distance nodulation signaling events. Involved in the autoregulation of nodulation (AON), a long distance systemic signaling from root to shoot and back again, which allows legumes to limit the number of root nodules formed based on available nitrogen and previous rhizobial colonization. This Pisum sativum (Garden pea) protein is Hydroxyproline O-arabinosyltransferase NOD3.